Reading from the N-terminus, the 328-residue chain is Ribosomal RNA large subunit methyltransferase F (328 aa).

The tract at residues 1–31 (MTDTRKPPRKKPQRPAKPAAPREKATLHPRN) is disordered.

The protein belongs to the methyltransferase superfamily. METTL16/RlmF family.

Its subcellular location is the cytoplasm. It carries out the reaction adenosine(1618) in 23S rRNA + S-adenosyl-L-methionine = N(6)-methyladenosine(1618) in 23S rRNA + S-adenosyl-L-homocysteine + H(+). Its function is as follows. Specifically methylates the adenine in position 1618 of 23S rRNA. This is Ribosomal RNA large subunit methyltransferase F from Pseudomonas savastanoi pv. phaseolicola (strain 1448A / Race 6) (Pseudomonas syringae pv. phaseolicola (strain 1448A / Race 6)).